The sequence spans 404 residues: Alpha-galactosidase A (404 aa).

A signal peptide spans 1-23 (MRKQLLLGLGLVSALLVSVQASA). Cystine bridges form between Cys45/Cys77 and Cys124/Cys154. Catalysis depends on Asp152, which acts as the Nucleophile. 185–189 (EWGDN) serves as a coordination point for substrate. Asp207 serves as the catalytic Proton donor.

The protein belongs to the glycosyl hydrolase 27 family.

It carries out the reaction Hydrolysis of terminal, non-reducing alpha-D-galactose residues in alpha-D-galactosides, including galactose oligosaccharides, galactomannans and galactolipids.. Its function is as follows. Hydrolyzes galactomannan found in plant cell wall, by cleaving alpha-1,6-D-galactose side-chains from the mannan backbone. Appears to act in synergy with mannanase (ManA) to elicit hydrolysis of galactomannan. Has greater activity against galactomannans with decreased degree of polymerisation values. To a lesser extent, is also able to degrade other galactosides containing alpha-1,6-linked D-galactose, such as melibiose and stachyose. The protein is Alpha-galactosidase A (agaA) of Cellvibrio japonicus (strain Ueda107) (Pseudomonas fluorescens subsp. cellulosa).